The following is a 30-amino-acid chain: ADNRRPIWNLGHMVNALKQIPTFLXDGANA.

Residue His-12 is part of the active site.

The protein belongs to the arthropod phospholipase D family. Class I subfamily. Mg(2+) is required as a cofactor. Post-translationally, contains 1 disulfide bond. As to expression, expressed by the venom gland.

It is found in the secreted. The catalysed reaction is an N-(acyl)-sphingosylphosphocholine = an N-(acyl)-sphingosyl-1,3-cyclic phosphate + choline. It carries out the reaction an N-(acyl)-sphingosylphosphoethanolamine = an N-(acyl)-sphingosyl-1,3-cyclic phosphate + ethanolamine. It catalyses the reaction a 1-acyl-sn-glycero-3-phosphocholine = a 1-acyl-sn-glycero-2,3-cyclic phosphate + choline. The enzyme catalyses a 1-acyl-sn-glycero-3-phosphoethanolamine = a 1-acyl-sn-glycero-2,3-cyclic phosphate + ethanolamine. Dermonecrotic toxins cleave the phosphodiester linkage between the phosphate and headgroup of certain phospholipids (sphingolipid and lysolipid substrates), forming an alcohol (often choline) and a cyclic phosphate. This toxin acts on sphingomyelin (SM). It may also act on ceramide phosphoethanolamine (CPE), lysophosphatidylcholine (LPC) and lysophosphatidylethanolamine (LPE), but not on lysophosphatidylserine (LPS), and lysophosphatidylglycerol (LPG). It acts by transphosphatidylation, releasing exclusively cyclic phosphate products as second products. In vivo, intradermal injection induces dermonecrosis. Induces hemolysis, increased vascular permeability, edema, inflammatory response, and platelet aggregation. The sequence is that of Dermonecrotic toxin LlSicTox-alphaIII-1 from Loxosceles laeta (South American recluse spider).